A 539-amino-acid chain; its full sequence is Chaperonin GroEL 1 (539 aa).

ATP contacts are provided by residues 30 to 33 (TLGP), Lys51, 87 to 91 (DGTTT), Gly415, 480 to 482 (NAA), and Asp496.

Belongs to the chaperonin (HSP60) family. Forms a cylinder of 14 subunits composed of two heptameric rings stacked back-to-back. Interacts with the co-chaperonin GroES.

It is found in the cytoplasm. It catalyses the reaction ATP + H2O + a folded polypeptide = ADP + phosphate + an unfolded polypeptide.. Functionally, together with its co-chaperonin GroES, plays an essential role in assisting protein folding. The GroEL-GroES system forms a nano-cage that allows encapsulation of the non-native substrate proteins and provides a physical environment optimized to promote and accelerate protein folding. In Bradyrhizobium sp. (strain ORS 278), this protein is Chaperonin GroEL 1.